The sequence spans 147 residues: Ponticulin-like protein C1 (147 aa).

The first 20 residues, 1–20 (MKFTKSLLLLIVAVFASSNA), serve as a signal peptide directing secretion. A lipid anchor (GPI-like-anchor amidated asparagine) is attached at Asn-118. Residue Asn-118 is glycosylated (N-linked (GlcNAc...) asparagine). Positions 119–147 (SSESDSSDSTRIGASFALAASVLLSMLAI) are cleaved as a propeptide — removed in mature form.

The protein belongs to the ponticulin family. Post-translationally, the GPI-like-anchor contains a phosphoceramide group, rather than a phosphatidyl group.

The protein localises to the cell membrane. In Dictyostelium discoideum (Social amoeba), this protein is Ponticulin-like protein C1 (ponC1).